Consider the following 211-residue polypeptide: Thiamine-phosphate synthase (211 aa).

4-amino-2-methyl-5-(diphosphooxymethyl)pyrimidine contacts are provided by residues glutamine 40 to arginine 42 and asparagine 72. Mg(2+) contacts are provided by aspartate 73 and aspartate 92. Residue serine 111 coordinates 4-amino-2-methyl-5-(diphosphooxymethyl)pyrimidine. Threonine 136–threonine 138 provides a ligand contact to 2-[(2R,5Z)-2-carboxy-4-methylthiazol-5(2H)-ylidene]ethyl phosphate. Position 139 (lysine 139) interacts with 4-amino-2-methyl-5-(diphosphooxymethyl)pyrimidine. Residues glycine 167 and valine 187 to serine 188 contribute to the 2-[(2R,5Z)-2-carboxy-4-methylthiazol-5(2H)-ylidene]ethyl phosphate site.

It belongs to the thiamine-phosphate synthase family. Requires Mg(2+) as cofactor.

The catalysed reaction is 2-[(2R,5Z)-2-carboxy-4-methylthiazol-5(2H)-ylidene]ethyl phosphate + 4-amino-2-methyl-5-(diphosphooxymethyl)pyrimidine + 2 H(+) = thiamine phosphate + CO2 + diphosphate. It catalyses the reaction 2-(2-carboxy-4-methylthiazol-5-yl)ethyl phosphate + 4-amino-2-methyl-5-(diphosphooxymethyl)pyrimidine + 2 H(+) = thiamine phosphate + CO2 + diphosphate. It carries out the reaction 4-methyl-5-(2-phosphooxyethyl)-thiazole + 4-amino-2-methyl-5-(diphosphooxymethyl)pyrimidine + H(+) = thiamine phosphate + diphosphate. The protein operates within cofactor biosynthesis; thiamine diphosphate biosynthesis; thiamine phosphate from 4-amino-2-methyl-5-diphosphomethylpyrimidine and 4-methyl-5-(2-phosphoethyl)-thiazole: step 1/1. Condenses 4-methyl-5-(beta-hydroxyethyl)thiazole monophosphate (THZ-P) and 2-methyl-4-amino-5-hydroxymethyl pyrimidine pyrophosphate (HMP-PP) to form thiamine monophosphate (TMP). In Laribacter hongkongensis (strain HLHK9), this protein is Thiamine-phosphate synthase.